The sequence spans 413 residues: Glycylpeptide N-tetradecanoyltransferase (413 aa).

Positions 34, 35, 163, 164, 165, 166, 174, 175, and 176 each coordinate tetradecanoyl-CoA.

Belongs to the NMT family.

It localises to the cytoplasm. It catalyses the reaction N-terminal glycyl-[protein] + tetradecanoyl-CoA = N-tetradecanoylglycyl-[protein] + CoA + H(+). Adds a myristoyl group to the N-terminal glycine residue of certain cellular proteins. This chain is Glycylpeptide N-tetradecanoyltransferase (nmt), found in Dictyostelium discoideum (Social amoeba).